The following is a 152-amino-acid chain: Transcriptional regulator MraZ (152 aa).

SpoVT-AbrB domains lie at 5-52 and 81-124; these read ASAI…PIHE and AHEC…DEAA.

The protein belongs to the MraZ family. As to quaternary structure, forms oligomers.

It is found in the cytoplasm. It localises to the nucleoid. This is Transcriptional regulator MraZ from Shewanella pealeana (strain ATCC 700345 / ANG-SQ1).